We begin with the raw amino-acid sequence, 305 residues long: Tetraspanin-12 (305 aa).

The Cytoplasmic portion of the chain corresponds to 1 to 12; the sequence is MAREDSVKCLRC. Residues cysteine 9 and cysteine 12 are each lipidated (S-palmitoyl cysteine). A helical transmembrane segment spans residues 13 to 33; sequence LLYALNLLFWLMSISVLAVSA. At 34 to 59 the chain is on the extracellular side; it reads WMRDYLNNVLTLTAETRVEEAVILTY. The chain crosses the membrane as a helical span at residues 60–80; that stretch reads FPVVHPVMIAVCCFLIIVGML. Over 81-89 the chain is Cytoplasmic; it reads GYCGTVKRN. Cysteine 83 carries S-palmitoyl cysteine lipidation. A helical membrane pass occupies residues 90 to 110; the sequence is LLLLAWYFGSLLVIFCVELAC. Residues 111 to 224 are Extracellular-facing; that stretch reads GVWTYEQELM…RGTKQLQVLR (114 aa). Residues 225-245 form a helical membrane-spanning segment; the sequence is FLGISIGVTQILAMILTITLL. Residues 246–305 are Cytoplasmic-facing; the sequence is WALYYDRREPGTDQMMSLKNDNSQHLSCPSVELLKPSLSRIFEHTSMANSFNTHFEMEEL.

This sequence belongs to the tetraspanin (TM4SF) family. In terms of assembly, component of a complex, at least composed of TSPAN12, FZD4 and norrin (NDP). Interacts (when palmitoylated) with ADAM10. Interacts with MMP14/MT1-MMP. Post-translationally, palmitoylated; required for interaction with ADAM10. The precise position of palmitoylated residues is unclear and occurs either on Cys-9, Cys-12 and/or Cys-83.

It is found in the cell membrane. In terms of biological role, regulator of cell surface receptor signal transduction. Plays a central role in retinal vascularization by regulating norrin (NDP) signal transduction. Acts in concert with norrin (NDP) to promote FZD4 multimerization and subsequent activation of FZD4, leading to promote accumulation of beta-catenin (CTNNB1) and stimulate LEF/TCF-mediated transcriptional programs. Suprisingly, it only activates the norrin (NDP)-dependent activation of FZD4, while it does not activate the Wnt-dependent activation of FZD4, suggesting the existence of a Wnt-independent signaling that also promote accumulation the beta-catenin (CTNNB1). Acts as a regulator of membrane proteinases such as ADAM10 and MMP14/MT1-MMP. Activates ADAM10-dependent cleavage activity of amyloid precursor protein (APP). Activates MMP14/MT1-MMP-dependent cleavage activity. This is Tetraspanin-12 (TSPAN12) from Homo sapiens (Human).